A 123-amino-acid chain; its full sequence is Ribosome-binding factor A (123 aa).

This sequence belongs to the RbfA family. Monomer. Binds 30S ribosomal subunits, but not 50S ribosomal subunits or 70S ribosomes.

The protein resides in the cytoplasm. One of several proteins that assist in the late maturation steps of the functional core of the 30S ribosomal subunit. Associates with free 30S ribosomal subunits (but not with 30S subunits that are part of 70S ribosomes or polysomes). Required for efficient processing of 16S rRNA. May interact with the 5'-terminal helix region of 16S rRNA. The protein is Ribosome-binding factor A of Neisseria gonorrhoeae (strain ATCC 700825 / FA 1090).